Reading from the N-terminus, the 211-residue chain is Nucleoside diphosphate kinase homolog 5 (211 aa).

Positions 13–145 (EKTLALIKPD…EREIRFMFPA (133 aa)) are NDK.

The protein belongs to the NDK family. In terms of assembly, component of the axonemal radial spoke complex 1 (RS1), at least composed of spoke head proteins RSPH1, RSPH3, RSPH9 and the cilia-specific component RSPH4A or sperm-specific component RSPH6A, spoke stalk proteins RSPH14, DNAJB13, DYDC1, ROPN1L and NME5, and the anchor protein IQUB. Interacts with IQUB. In terms of tissue distribution, expressed in the trachea, ependymal cells and oviduct (at protein level). Expressed predominantly in germ cells of the testis. Not expressed in testicular somatic cells.

It localises to the cell projection. It is found in the cilium. The protein localises to the cytoplasm. Its subcellular location is the cytoskeleton. The protein resides in the flagellum axoneme. Functions as part of axonemal radial spoke complexes that play an important part in the motility of sperm and cilia. Does not seem to have nucleoside diphosphate kinase (NDPK) activity. Confers protection from cell death by BAX and alters the cellular levels of several antioxidant enzymes including GPX5. May play a role in spermiogenesis by increasing the ability of late-stage spermatids to eliminate reactive oxygen species. The chain is Nucleoside diphosphate kinase homolog 5 (Nme5) from Mus musculus (Mouse).